We begin with the raw amino-acid sequence, 156 residues long: MINLSILISSSEVSGPGGLFDINATLPLVAIQFILLMVTLNIILYSPLLTIIEERKEYVLSHLAQASEKLAQAKELTTQYEQDLETARKEAQLEIANSQNIHKEILDIELDISQKYIDNLLETISSDLLNKKKTALDSLDTIVTSLCTEVETKLSI.

Residues 24–44 form a helical membrane-spanning segment; sequence ATLPLVAIQFILLMVTLNIIL.

The protein belongs to the ATPase B chain family. F-type ATPases have 2 components, F(1) - the catalytic core - and F(0) - the membrane proton channel. F(1) has five subunits: alpha(3), beta(3), gamma(1), delta(1), epsilon(1). F(0) has four main subunits: a(1), b(1), b'(1) and c(10-14). The alpha and beta chains form an alternating ring which encloses part of the gamma chain. F(1) is attached to F(0) by a central stalk formed by the gamma and epsilon chains, while a peripheral stalk is formed by the delta, b and b' chains.

It localises to the plastid. It is found in the chloroplast thylakoid membrane. In terms of biological role, f(1)F(0) ATP synthase produces ATP from ADP in the presence of a proton or sodium gradient. F-type ATPases consist of two structural domains, F(1) containing the extramembraneous catalytic core and F(0) containing the membrane proton channel, linked together by a central stalk and a peripheral stalk. During catalysis, ATP synthesis in the catalytic domain of F(1) is coupled via a rotary mechanism of the central stalk subunits to proton translocation. Its function is as follows. Component of the F(0) channel, it forms part of the peripheral stalk, linking F(1) to F(0). The b'-subunit is a diverged and duplicated form of b found in plants and photosynthetic bacteria. In Thalassiosira pseudonana (Marine diatom), this protein is ATP synthase subunit b', chloroplastic.